The following is a 649-amino-acid chain: Threonine--tRNA ligase (649 aa).

One can recognise a TGS domain in the interval 1–60 (MHVTLPDGKQLDLQPGATALDAAKAIGPRLAQDALGATANGELTDLMTPLSDGASITLIT). Residues 248–544 (DHRKLGKELE…LIEHYAGDFP (297 aa)) are catalytic. Zn(2+)-binding residues include C341, H392, and H521.

This sequence belongs to the class-II aminoacyl-tRNA synthetase family. In terms of assembly, homodimer. Zn(2+) serves as cofactor.

The protein resides in the cytoplasm. It carries out the reaction tRNA(Thr) + L-threonine + ATP = L-threonyl-tRNA(Thr) + AMP + diphosphate + H(+). In terms of biological role, catalyzes the attachment of threonine to tRNA(Thr) in a two-step reaction: L-threonine is first activated by ATP to form Thr-AMP and then transferred to the acceptor end of tRNA(Thr). Also edits incorrectly charged L-seryl-tRNA(Thr). The protein is Threonine--tRNA ligase of Deinococcus radiodurans (strain ATCC 13939 / DSM 20539 / JCM 16871 / CCUG 27074 / LMG 4051 / NBRC 15346 / NCIMB 9279 / VKM B-1422 / R1).